The primary structure comprises 313 residues: Aspartate carbamoyltransferase catalytic subunit (313 aa).

Carbamoyl phosphate is bound by residues arginine 66 and threonine 67. Lysine 94 is a binding site for L-aspartate. Positions 116, 144, and 147 each coordinate carbamoyl phosphate. Residues arginine 177 and arginine 231 each coordinate L-aspartate. Carbamoyl phosphate is bound by residues glycine 272 and proline 273.

This sequence belongs to the aspartate/ornithine carbamoyltransferase superfamily. ATCase family. In terms of assembly, heterododecamer (2C3:3R2) of six catalytic PyrB chains organized as two trimers (C3), and six regulatory PyrI chains organized as three dimers (R2).

It catalyses the reaction carbamoyl phosphate + L-aspartate = N-carbamoyl-L-aspartate + phosphate + H(+). It participates in pyrimidine metabolism; UMP biosynthesis via de novo pathway; (S)-dihydroorotate from bicarbonate: step 2/3. Functionally, catalyzes the condensation of carbamoyl phosphate and aspartate to form carbamoyl aspartate and inorganic phosphate, the committed step in the de novo pyrimidine nucleotide biosynthesis pathway. The sequence is that of Aspartate carbamoyltransferase catalytic subunit from Pelagibacter ubique (strain HTCC1062).